A 781-amino-acid polypeptide reads, in one-letter code: Beta-mannosyltransferase 4 (781 aa).

The Cytoplasmic segment spans residues 1-17 (MTKSYMPLFRSPRQFKK). A helical membrane pass occupies residues 18–38 (IYFILIPLILAVIILHVFFDG). Residues 39–781 (FNKISEYSPT…EKEDDDDIEV (743 aa)) lie on the Extracellular side of the membrane. The stretch at 640 to 733 (KLGDSEAAIK…AKDEDKNEDE (94 aa)) forms a coiled coil. Composition is skewed to basic and acidic residues over residues 663-728 (KAEK…KDED) and 736-750 (KEKNDESGLTEKSEV). The disordered stretch occupies residues 663 to 781 (KAEKEKAEKE…EKEDDDDIEV (119 aa)). A compositionally biased stretch (acidic residues) spans 751–781 (EENGENTNEGGEDDGDGDGEEEKEDDDDIEV).

The protein belongs to the BMT family.

The protein localises to the membrane. In terms of biological role, beta-mannosyltransferase involved in cell wall biosynthesis. Required for the elongation of beta-mannose chains on the acid-labile fraction of cell wall phosphopeptidomannan. The protein is Beta-mannosyltransferase 4 (BMT4) of Candida albicans (strain SC5314 / ATCC MYA-2876) (Yeast).